A 118-amino-acid polypeptide reads, in one-letter code: Large ribosomal subunit protein bL20 (118 aa).

This sequence belongs to the bacterial ribosomal protein bL20 family.

Binds directly to 23S ribosomal RNA and is necessary for the in vitro assembly process of the 50S ribosomal subunit. It is not involved in the protein synthesizing functions of that subunit. The chain is Large ribosomal subunit protein bL20 from Desulfovibrio desulfuricans (strain ATCC 27774 / DSM 6949 / MB).